The primary structure comprises 129 residues: Small ribosomal subunit protein uS11 (129 aa).

It belongs to the universal ribosomal protein uS11 family. As to quaternary structure, part of the 30S ribosomal subunit. Interacts with proteins S7 and S18. Binds to IF-3.

Its function is as follows. Located on the platform of the 30S subunit, it bridges several disparate RNA helices of the 16S rRNA. Forms part of the Shine-Dalgarno cleft in the 70S ribosome. The sequence is that of Small ribosomal subunit protein uS11 from Zymomonas mobilis subsp. mobilis (strain ATCC 31821 / ZM4 / CP4).